We begin with the raw amino-acid sequence, 227 residues long: uncharacterized protein (227 aa).

Residues 1 to 22 form the signal peptide; the sequence is MDSVMRKSLFLLLPLVVTNAHA.

This is an uncharacterized protein from Salmonella typhi.